A 175-amino-acid polypeptide reads, in one-letter code: ATP synthase subunit b (175 aa).

Residues 13–33 traverse the membrane as a helical segment; that stretch reads LLSPNPGLIFWTAVTFLLLLL.

Belongs to the ATPase B chain family. F-type ATPases have 2 components, F(1) - the catalytic core - and F(0) - the membrane proton channel. F(1) has five subunits: alpha(3), beta(3), gamma(1), delta(1), epsilon(1). F(0) has four main subunits: a(1), b(2) and c(10-14). The alpha and beta chains form an alternating ring which encloses part of the gamma chain. F(1) is attached to F(0) by a central stalk formed by the gamma and epsilon chains, while a peripheral stalk is formed by the delta and b chains.

The protein resides in the cell inner membrane. Functionally, f(1)F(0) ATP synthase produces ATP from ADP in the presence of a proton or sodium gradient. F-type ATPases consist of two structural domains, F(1) containing the extramembraneous catalytic core and F(0) containing the membrane proton channel, linked together by a central stalk and a peripheral stalk. During catalysis, ATP synthesis in the catalytic domain of F(1) is coupled via a rotary mechanism of the central stalk subunits to proton translocation. In terms of biological role, component of the F(0) channel, it forms part of the peripheral stalk, linking F(1) to F(0). The chain is ATP synthase subunit b from Chloroherpeton thalassium (strain ATCC 35110 / GB-78).